The chain runs to 358 residues: MSTAREQPIFSTRAHVFQIDPATKRNWIPAGKHALTVSYFYDATRNVYRIISIGGAKAIINSTVTPNMTFTKTSQKFGQWADSRANTVYGLGFGSEQQLTQFAEKFQEVKEAARLAREKSQDGGELTSTALAMASHQVPPSPLVSTNGPEEKLFRSQSADAPGPTERERLKKMLSEGSVGEVQWEAEFFALQDSNQRLAGALREANAAATQWRQQLEVQRAEAEHLRQRVAELEAQVAAEPVRAGEKEATSQSVEQLEARVQTKDQEIQTLKNQSTGPREAPDTAEREETQQQVQDLETRNAELEQQLRAMESNLEEARAERERARAEVGRAAQLLDVRLFELSELREGLARLAEAAP.

The segment at 1 to 80 (MSTAREQPIF…TKTSQKFGQW (80 aa)) is required for interaction with NFATC2. The region spanning 1 to 113 (MSTAREQPIF…EKFQEVKEAA (113 aa)) is the WH1 domain. Residues 95-122 (SEQQLTQFAEKFQEVKEAARLAREKSQD) are a coiled coil. Residues Ser120 and Ser158 each carry the phosphoserine modification. 2 disordered regions span residues 137–168 (QVPP…TERE) and 239–296 (AEPV…QVQD). Positions 190 to 355 (ALQDSNQRLA…LREGLARLAE (166 aa)) form a coiled coil. Positions 257-267 (LEARVQTKDQE) are enriched in basic and acidic residues. Positions 268-277 (IQTLKNQSTG) are enriched in polar residues. Positions 280–290 (EAPDTAEREET) are enriched in basic and acidic residues.

It belongs to the Homer family. Tetramer. Encodes coiled-coil structures that mediate homo- and heteromultimerization. Interacts with NFATC2; interaction is calcium independent; interaction competes with PPP3CA for NFATC2 binding; interaction is reduced by AKT activation. Interacts with NFATC1 and NFATC4. Interacts with SHANK1; forms a high-order complex at least composed of SHANK1 and HOMER3; the complex formation is regulated by CAMK2A-mediated phosphorylation.

The protein resides in the cytoplasm. The protein localises to the postsynaptic density. It is found in the synapse. Postsynaptic density scaffolding protein. Binds and cross-links cytoplasmic regions of GRM1, GRM5, ITPR1, DNM3, RYR1, RYR2, SHANK1 and SHANK3. By physically linking GRM1 and GRM5 with ER-associated ITPR1 receptors, it aids the coupling of surface receptors to intracellular calcium release. Negatively regulates T cell activation by inhibiting the calcineurin-NFAT pathway. Acts by competing with calcineurin/PPP3CA for NFAT protein binding, hence preventing NFAT activation by PPP3CA. The chain is Homer protein homolog 3 from Rattus norvegicus (Rat).